The sequence spans 358 residues: MTGQRAEKPVLRVLGGEAVWPPPVWLMRQAGRYLPEYRKLREKAGNFIALCTTPPLATEVTLQPVRRFGMDAAILFSDILILPWALGQKLRFAEGEGPRLERIDGLAGLEALDPAALRQGTEPVMETVSRVRAELPPETTLIGFAGSPFTVACYMIDGRGGDFPLTREVAYADPALLAAVIETVTTATIDYLSWQIEAGADCVMLFDSWAGLLPPDLFRAHVIHPTARIVEQLRVRHPGVKVIGFPRLGGLMTLPYIADTGVDAVGMDTSVDPVALARLAPRRVAFQGNLDPLLLRAGGISLGQAVERIARGLEGHPHIFNLGHGIVPDTPPEHVAAVIERLRSLEPGELEESALAAT.

Substrate is bound by residues 28–32 (RQAGR), aspartate 78, tyrosine 154, serine 208, and histidine 324.

It belongs to the uroporphyrinogen decarboxylase family. In terms of assembly, homodimer.

It is found in the cytoplasm. The enzyme catalyses uroporphyrinogen III + 4 H(+) = coproporphyrinogen III + 4 CO2. The protein operates within porphyrin-containing compound metabolism; protoporphyrin-IX biosynthesis; coproporphyrinogen-III from 5-aminolevulinate: step 4/4. Functionally, catalyzes the decarboxylation of four acetate groups of uroporphyrinogen-III to yield coproporphyrinogen-III. The sequence is that of Uroporphyrinogen decarboxylase from Acidiphilium cryptum (strain JF-5).